Reading from the N-terminus, the 516-residue chain is tRNA-2-methylthio-N(6)-dimethylallyladenosine synthase (516 aa).

An MTTase N-terminal domain is found at 17–133 (RSFEVRTFGC…LPSLLSRSEH (117 aa)). Residues Cys-26, Cys-62, Cys-96, Cys-170, Cys-174, and Cys-177 each contribute to the [4Fe-4S] cluster site. Positions 156-392 (RESAYAGWVS…LALQERISTE (237 aa)) constitute a Radical SAM core domain. Residues 395–466 (AKLIGTEVEL…PFFLIADSGV (72 aa)) enclose the TRAM domain. 2 disordered regions span residues 409-438 (SGGR…QGHV) and 492-516 (GLGL…GCGC). Residues 412–438 (RKNDKTQRMTGRSRDGRLVHFDPQGHV) are compositionally biased toward basic and acidic residues.

This sequence belongs to the methylthiotransferase family. MiaB subfamily. Monomer. Requires [4Fe-4S] cluster as cofactor.

The protein resides in the cytoplasm. The catalysed reaction is N(6)-dimethylallyladenosine(37) in tRNA + (sulfur carrier)-SH + AH2 + 2 S-adenosyl-L-methionine = 2-methylsulfanyl-N(6)-dimethylallyladenosine(37) in tRNA + (sulfur carrier)-H + 5'-deoxyadenosine + L-methionine + A + S-adenosyl-L-homocysteine + 2 H(+). Catalyzes the methylthiolation of N6-(dimethylallyl)adenosine (i(6)A), leading to the formation of 2-methylthio-N6-(dimethylallyl)adenosine (ms(2)i(6)A) at position 37 in tRNAs that read codons beginning with uridine. In Corynebacterium diphtheriae (strain ATCC 700971 / NCTC 13129 / Biotype gravis), this protein is tRNA-2-methylthio-N(6)-dimethylallyladenosine synthase.